A 333-amino-acid polypeptide reads, in one-letter code: Cap-specific mRNA (nucleoside-2'-O-)-methyltransferase (333 aa).

Y22 serves as a coordination point for mRNA. Positions 39, 66, 68, 72, 95, 97, 116, and 138 each coordinate S-adenosyl-L-methionine. The binding to NPH-I stretch occupies residues 169-249 (PVASSLKWRC…NKIVRNKVVI (81 aa)). K175 serves as the catalytic For methyltransferase activity. Residues 177–180 (RCPF), D182, 205–207 (SAE), and E233 contribute to the mRNA site. Basic and acidic residues predominate over residues 305-320 (SHEPIQRKISSKDSMS). The segment at 305–333 (SHEPIQRKISSKDSMSKNRNSKRSVRGNK) is disordered. The segment covering 323–333 (RNSKRSVRGNK) has biased composition (basic residues).

Belongs to the class I-like SAM-binding methyltransferase superfamily. Poxvirus/kinetoplastid 2'-O-MTase family. In terms of assembly, interacts with poly(A) polymerase catalytic subunit OPG063. Interacts with OPG109 and OPG123; these interactions might help linking transcription to capping and polyadenylation.

The protein resides in the virion. The enzyme catalyses a 5'-end (N(7)-methyl 5'-triphosphoguanosine)-ribonucleoside in mRNA + S-adenosyl-L-methionine = a 5'-end (N(7)-methyl 5'-triphosphoguanosine)-(2'-O-methyl-ribonucleoside) in mRNA + S-adenosyl-L-homocysteine + H(+). In terms of biological role, displays methyltransferase, positive regulation of the poly(A) polymerase and transcription elongation activities. Involved in the modification of both mRNA ends and in intermediate and late gene positive transcription elongation. At the mRNAs 5' end, methylates the ribose 2' OH group of the first transcribed nucleotide, thereby producing a 2'-O-methylpurine cap. At the 3' end, functions as a processivity factor which stimulates the activity of the viral poly(A) polymerase OPG063 that creates mRNA's poly(A) tail. In the presence of OPG102, OPG063 does not dissociate from the RNA allowing tail elongation to around 250 adenylates. This is Cap-specific mRNA (nucleoside-2'-O-)-methyltransferase (OPG102) from Cynomys gunnisoni (Gunnison's prairie dog).